A 276-amino-acid chain; its full sequence is uncharacterized protein (276 aa).

The first 25 residues, 1–25 (MNKKRLLPKASLGALFMLFGTALTA), serve as a signal peptide directing secretion. Cysteine 26 carries the N-palmitoyl cysteine lipid modification. Cysteine 26 carries the S-diacylglycerol cysteine lipid modification.

This sequence belongs to the MG439/MG440 family.

The protein resides in the cell membrane. This is an uncharacterized protein from Mycoplasma pneumoniae (strain ATCC 29342 / M129 / Subtype 1) (Mycoplasmoides pneumoniae).